Here is a 283-residue protein sequence, read N- to C-terminus: ATP phosphoribosyltransferase (283 aa).

It belongs to the ATP phosphoribosyltransferase family. Long subfamily. Mg(2+) is required as a cofactor.

It localises to the cytoplasm. The catalysed reaction is 1-(5-phospho-beta-D-ribosyl)-ATP + diphosphate = 5-phospho-alpha-D-ribose 1-diphosphate + ATP. The protein operates within amino-acid biosynthesis; L-histidine biosynthesis; L-histidine from 5-phospho-alpha-D-ribose 1-diphosphate: step 1/9. Feedback inhibited by histidine. In terms of biological role, catalyzes the condensation of ATP and 5-phosphoribose 1-diphosphate to form N'-(5'-phosphoribosyl)-ATP (PR-ATP). Has a crucial role in the pathway because the rate of histidine biosynthesis seems to be controlled primarily by regulation of HisG enzymatic activity. The protein is ATP phosphoribosyltransferase of Azobacteroides pseudotrichonymphae genomovar. CFP2.